The following is a 96-amino-acid chain: Progonadoliberin-1 (96 aa).

An N-terminal signal peptide occupies residues 1–26 (MHRKMAVKTLSVWLLLVGTLVPQHCC). Pyrrolidone carboxylic acid is present on Gln-27. Residue Gly-36 is modified to Glycine amide.

This sequence belongs to the GnRH family. Preoptic area of the brain.

The protein localises to the secreted. Functionally, stimulates the secretion of gonadotropins. This chain is Progonadoliberin-1 (gnrh1), found in Verasper moseri (Barfin flounder).